We begin with the raw amino-acid sequence, 487 residues long: Sugar transporter ERD6-like 6 (487 aa).

An N-acetylserine modification is found at S2. Helical transmembrane passes span 46-66 (ISVL…GFTC), 89-109 (VFGS…GQIA), 115-135 (KGSL…ISFA), 146-166 (LLEG…IAEI), 178-198 (VNQL…LFVP), 201-221 (ILAV…FFIP), 284-304 (LMVG…GVLF), 320-340 (AATF…TWLV), 347-367 (LLLT…AAAF), 389-409 (VGVV…PWLI), 425-445 (IATL…NLLL), and 451-471 (GTFT…TLWV).

This sequence belongs to the major facilitator superfamily. Sugar transporter (TC 2.A.1.1) family.

The protein localises to the membrane. Sugar transporter. This is Sugar transporter ERD6-like 6 from Arabidopsis thaliana (Mouse-ear cress).